The sequence spans 442 residues: Putative aminohydrolase SsnA (442 aa).

Residues His-62, His-64, His-227, and Asp-312 each contribute to the Zn(2+) site.

Belongs to the metallo-dependent hydrolases superfamily. ATZ/TRZ family.

The protein is Putative aminohydrolase SsnA (ssnA) of Escherichia coli (strain K12).